The following is a 394-amino-acid chain: Ribulose bisphosphate carboxylase large chain (394 aa).

Lysine 5 is subject to N6,N6,N6-trimethyllysine. Substrate-binding residues include asparagine 114 and threonine 164. Catalysis depends on lysine 166, which acts as the Proton acceptor. Lysine 168 serves as a coordination point for substrate. 3 residues coordinate Mg(2+): lysine 192, aspartate 194, and glutamate 195. Lysine 192 is subject to N6-carboxylysine. Histidine 285 (proton acceptor) is an active-site residue. Substrate contacts are provided by arginine 286, histidine 318, and serine 370.

Belongs to the RuBisCO large chain family. Type I subfamily. Heterohexadecamer of 8 large chains and 8 small chains. Requires Mg(2+) as cofactor.

The protein resides in the plastid. It is found in the chloroplast. The catalysed reaction is 2 (2R)-3-phosphoglycerate + 2 H(+) = D-ribulose 1,5-bisphosphate + CO2 + H2O. It carries out the reaction D-ribulose 1,5-bisphosphate + O2 = 2-phosphoglycolate + (2R)-3-phosphoglycerate + 2 H(+). RuBisCO catalyzes two reactions: the carboxylation of D-ribulose 1,5-bisphosphate, the primary event in carbon dioxide fixation, as well as the oxidative fragmentation of the pentose substrate in the photorespiration process. Both reactions occur simultaneously and in competition at the same active site. This Barclaya longifolia (Orchid lily) protein is Ribulose bisphosphate carboxylase large chain (rbcL).